The following is a 128-amino-acid chain: Small ribosomal subunit protein uS11 (128 aa).

Belongs to the universal ribosomal protein uS11 family. In terms of assembly, part of the 30S ribosomal subunit. Interacts with proteins S7 and S18. Binds to IF-3.

In terms of biological role, located on the platform of the 30S subunit, it bridges several disparate RNA helices of the 16S rRNA. Forms part of the Shine-Dalgarno cleft in the 70S ribosome. This Solidesulfovibrio magneticus (strain ATCC 700980 / DSM 13731 / RS-1) (Desulfovibrio magneticus) protein is Small ribosomal subunit protein uS11.